We begin with the raw amino-acid sequence, 181 residues long: ATP synthase subunit b (181 aa).

The chain crosses the membrane as a helical span at residues 23–43 (FIHIPTFIYTALNLVILYFIL).

Belongs to the ATPase B chain family. F-type ATPases have 2 components, F(1) - the catalytic core - and F(0) - the membrane proton channel. F(1) has five subunits: alpha(3), beta(3), gamma(1), delta(1), epsilon(1). F(0) has three main subunits: a(1), b(2) and c(10-14). The alpha and beta chains form an alternating ring which encloses part of the gamma chain. F(1) is attached to F(0) by a central stalk formed by the gamma and epsilon chains, while a peripheral stalk is formed by the delta and b chains.

Its subcellular location is the cell membrane. Functionally, f(1)F(0) ATP synthase produces ATP from ADP in the presence of a proton or sodium gradient. F-type ATPases consist of two structural domains, F(1) containing the extramembraneous catalytic core and F(0) containing the membrane proton channel, linked together by a central stalk and a peripheral stalk. During catalysis, ATP synthesis in the catalytic domain of F(1) is coupled via a rotary mechanism of the central stalk subunits to proton translocation. Component of the F(0) channel, it forms part of the peripheral stalk, linking F(1) to F(0). This is ATP synthase subunit b from Acetivibrio thermocellus (strain ATCC 27405 / DSM 1237 / JCM 9322 / NBRC 103400 / NCIMB 10682 / NRRL B-4536 / VPI 7372) (Clostridium thermocellum).